Consider the following 80-residue polypeptide: Small ribosomal subunit protein bS18 (80 aa).

Belongs to the bacterial ribosomal protein bS18 family. As to quaternary structure, part of the 30S ribosomal subunit. Forms a tight heterodimer with protein bS6.

Functionally, binds as a heterodimer with protein bS6 to the central domain of the 16S rRNA, where it helps stabilize the platform of the 30S subunit. In Staphylococcus carnosus (strain TM300), this protein is Small ribosomal subunit protein bS18.